Reading from the N-terminus, the 97-residue chain is UPF0473 protein Exig_2070 (97 aa).

This sequence belongs to the UPF0473 family.

The sequence is that of UPF0473 protein Exig_2070 from Exiguobacterium sibiricum (strain DSM 17290 / CCUG 55495 / CIP 109462 / JCM 13490 / 255-15).